The following is a 434-amino-acid chain: Serine hydroxymethyltransferase (434 aa).

Residues L131 and 135 to 137 (GHL) contribute to the (6S)-5,6,7,8-tetrahydrofolate site. Residue K240 is modified to N6-(pyridoxal phosphate)lysine.

Belongs to the SHMT family. Homodimer. The cofactor is pyridoxal 5'-phosphate.

It localises to the cytoplasm. The enzyme catalyses (6R)-5,10-methylene-5,6,7,8-tetrahydrofolate + glycine + H2O = (6S)-5,6,7,8-tetrahydrofolate + L-serine. Its pathway is one-carbon metabolism; tetrahydrofolate interconversion. It functions in the pathway amino-acid biosynthesis; glycine biosynthesis; glycine from L-serine: step 1/1. Its function is as follows. Catalyzes the reversible interconversion of serine and glycine with tetrahydrofolate (THF) serving as the one-carbon carrier. This reaction serves as the major source of one-carbon groups required for the biosynthesis of purines, thymidylate, methionine, and other important biomolecules. Also exhibits THF-independent aldolase activity toward beta-hydroxyamino acids, producing glycine and aldehydes, via a retro-aldol mechanism. In Gluconobacter oxydans (strain 621H) (Gluconobacter suboxydans), this protein is Serine hydroxymethyltransferase.